The sequence spans 199 residues: CASP-like protein 4B1 (199 aa).

The disordered stretch occupies residues 1–32; that stretch reads MAMVASPDDIVKSPLPPPPPPPPPPLPPAHKD. Topologically, residues 1-53 are cytoplasmic; it reads MAMVASPDDIVKSPLPPPPPPPPPPLPPAHKDKAAYNPYSGCPAHGGDDGLDG. Residues 14 to 28 are compositionally biased toward pro residues; the sequence is PLPPPPPPPPPPLPP. A helical transmembrane segment spans residues 54 to 74; that stretch reads IVLVLRAAAALLALVAMALVA. Over 75-91 the chain is Extracellular; it reads SCRHGDWMEFTRYQEYR. Residues 92 to 112 form a helical membrane-spanning segment; the sequence is YLLGVAVVASLYSALQAARTF. The Cytoplasmic portion of the chain corresponds to 113–127; that stretch reads RRMRAGTAYAATFLD. The helical transmembrane segment at 128 to 148 threads the bilayer; that stretch reads FAGDQAVGYLLITASSAALPI. Topologically, residues 149 to 163 are extracellular; that stretch reads TIRMRSAVVNTFTDV. The chain crosses the membrane as a helical span at residues 164–184; the sequence is VAASISFAFLAFAALAFSALI. Over 185-199 the chain is Cytoplasmic; it reads AGFRLSSSSSSAYNY.

This sequence belongs to the Casparian strip membrane proteins (CASP) family. As to quaternary structure, homodimer and heterodimers.

It localises to the cell membrane. In Oryza sativa subsp. japonica (Rice), this protein is CASP-like protein 4B1.